We begin with the raw amino-acid sequence, 176 residues long: Urease accessory protein UreE (176 aa).

Positions Ala147–His176 are disordered.

Belongs to the UreE family.

It is found in the cytoplasm. Functionally, involved in urease metallocenter assembly. Binds nickel. Probably functions as a nickel donor during metallocenter assembly. The protein is Urease accessory protein UreE of Alcanivorax borkumensis (strain ATCC 700651 / DSM 11573 / NCIMB 13689 / SK2).